A 266-amino-acid chain; its full sequence is Shikimate dehydrogenase (NADP(+)) (266 aa).

Residues 14–16 and threonine 61 each bind shikimate; that span reads SLS. The active-site Proton acceptor is lysine 65. Asparagine 85 and aspartate 100 together coordinate shikimate. NADP(+) contacts are provided by residues 124–128 and alanine 210; that span reads GAGGA. Tyrosine 212 provides a ligand contact to shikimate. Position 233 (glycine 233) interacts with NADP(+).

It belongs to the shikimate dehydrogenase family. As to quaternary structure, homodimer.

The enzyme catalyses shikimate + NADP(+) = 3-dehydroshikimate + NADPH + H(+). Its pathway is metabolic intermediate biosynthesis; chorismate biosynthesis; chorismate from D-erythrose 4-phosphate and phosphoenolpyruvate: step 4/7. Involved in the biosynthesis of the chorismate, which leads to the biosynthesis of aromatic amino acids. Catalyzes the reversible NADPH linked reduction of 3-dehydroshikimate (DHSA) to yield shikimate (SA). The sequence is that of Shikimate dehydrogenase (NADP(+)) from Halobacterium salinarum (strain ATCC 29341 / DSM 671 / R1).